The following is a 1128-amino-acid chain: Membrane-associated guanylate kinase, WW and PDZ domain-containing protein 3 (1128 aa).

One can recognise a PDZ 1 domain in the interval 22–108; sequence WGGPAGPDPE…PVRLKTVRPG (87 aa). Positions 116–290 constitute a Guanylate kinase-like domain; it reads RHYLSLQFQK…SMDFRNYMSR (175 aa). 123-130 is a binding site for ATP; the sequence is FQKGSIDH. The disordered stretch occupies residues 184 to 276; sequence TYDGNFYGTP…DWMKPVPSYN (93 aa). Residues 193 to 204 show a composition bias toward pro residues; sequence PKPPAEPSPFQP. Acidic residues predominate over residues 238-247; it reads LPEDEEEEEK. Residues 257–267 show a composition bias toward basic and acidic residues; the sequence is ENKEKHSDSSD. WW domains follow at residues 295-328 and 341-374; these read EPLP…DPRL and GELP…NPVL. PDZ domains lie at 412–494 and 581–657; these read RTSL…TLCR and TIPL…LILR. A disordered region spans residues 658-688; that stretch reads GGPPSPTKTGKMKDKQESSGSLEALSDAIPQ. PDZ domains lie at 728-810 and 852-939; these read DVFL…TVRR and DVCL…VAEE. 2 disordered regions span residues 939 to 985 and 999 to 1018; these read EEHR…GKEV and LAQP…SQAQ. Composition is skewed to polar residues over residues 946–956 and 965–974; these read SGTNSAKQSPA and AQSSASSTDR. A PDZ 6 domain is found at 1024 to 1106; it reads PVELERGPRG…KVLLLLRPGT (83 aa).

This sequence belongs to the MAGUK family.

It is found in the cell membrane. It localises to the cell junction. The protein localises to the tight junction. Acts as a scaffolding protein at cell-cell junctions, thereby regulating various cellular and signaling processes. This Gallus gallus (Chicken) protein is Membrane-associated guanylate kinase, WW and PDZ domain-containing protein 3 (MAGI3).